The chain runs to 548 residues: Chaperonin GroEL (548 aa).

ATP is bound by residues 30–33 (TLGP), Lys-51, 87–91 (DGTTT), Gly-415, 479–481 (NAA), and Asp-495.

Belongs to the chaperonin (HSP60) family. As to quaternary structure, forms a cylinder of 14 subunits composed of two heptameric rings stacked back-to-back. Interacts with the co-chaperonin GroES.

The protein resides in the cytoplasm. It catalyses the reaction ATP + H2O + a folded polypeptide = ADP + phosphate + an unfolded polypeptide.. Its function is as follows. Together with its co-chaperonin GroES, plays an essential role in assisting protein folding. The GroEL-GroES system forms a nano-cage that allows encapsulation of the non-native substrate proteins and provides a physical environment optimized to promote and accelerate protein folding. This is Chaperonin GroEL from Nitratidesulfovibrio vulgaris (strain DSM 19637 / Miyazaki F) (Desulfovibrio vulgaris).